A 138-amino-acid chain; its full sequence is Putative pre-16S rRNA nuclease (138 aa).

This sequence belongs to the YqgF nuclease family.

The protein localises to the cytoplasm. Its function is as follows. Could be a nuclease involved in processing of the 5'-end of pre-16S rRNA. In Carboxydothermus hydrogenoformans (strain ATCC BAA-161 / DSM 6008 / Z-2901), this protein is Putative pre-16S rRNA nuclease.